Reading from the N-terminus, the 250-residue chain is 5-oxoprolinase subunit A (250 aa).

The protein belongs to the LamB/PxpA family. Forms a complex composed of PxpA, PxpB and PxpC.

The catalysed reaction is 5-oxo-L-proline + ATP + 2 H2O = L-glutamate + ADP + phosphate + H(+). Its function is as follows. Catalyzes the cleavage of 5-oxoproline to form L-glutamate coupled to the hydrolysis of ATP to ADP and inorganic phosphate. This is 5-oxoprolinase subunit A from Staphylococcus aureus (strain bovine RF122 / ET3-1).